The primary structure comprises 105 residues: Large ribosomal subunit protein uL24 (105 aa).

It belongs to the universal ribosomal protein uL24 family. In terms of assembly, part of the 50S ribosomal subunit.

In terms of biological role, one of two assembly initiator proteins, it binds directly to the 5'-end of the 23S rRNA, where it nucleates assembly of the 50S subunit. One of the proteins that surrounds the polypeptide exit tunnel on the outside of the subunit. This Mycolicibacterium smegmatis (strain ATCC 700084 / mc(2)155) (Mycobacterium smegmatis) protein is Large ribosomal subunit protein uL24.